Reading from the N-terminus, the 137-residue chain is NADPH-dependent 7-cyano-7-deazaguanine reductase (137 aa).

Cysteine 51 (thioimide intermediate) is an active-site residue. The Proton donor role is filled by aspartate 58. Substrate-binding positions include 73–75 (VEL) and 92–93 (HE).

This sequence belongs to the GTP cyclohydrolase I family. QueF type 1 subfamily.

The protein resides in the cytoplasm. It catalyses the reaction 7-aminomethyl-7-carbaguanine + 2 NADP(+) = 7-cyano-7-deazaguanine + 2 NADPH + 3 H(+). Its pathway is tRNA modification; tRNA-queuosine biosynthesis. In terms of biological role, catalyzes the NADPH-dependent reduction of 7-cyano-7-deazaguanine (preQ0) to 7-aminomethyl-7-deazaguanine (preQ1). The chain is NADPH-dependent 7-cyano-7-deazaguanine reductase from Gloeobacter violaceus (strain ATCC 29082 / PCC 7421).